The primary structure comprises 173 residues: Ribosome maturation factor RimP (173 aa).

It belongs to the RimP family.

It localises to the cytoplasm. Functionally, required for maturation of 30S ribosomal subunits. The chain is Ribosome maturation factor RimP from Pelodictyon phaeoclathratiforme (strain DSM 5477 / BU-1).